Here is an 87-residue protein sequence, read N- to C-terminus: Small ribosomal subunit protein bS20 (87 aa).

Positions 1–27 (MANIKSAKKRAVTSEKRRKHNASRRSM) are disordered.

This sequence belongs to the bacterial ribosomal protein bS20 family.

Its function is as follows. Binds directly to 16S ribosomal RNA. The sequence is that of Small ribosomal subunit protein bS20 from Erwinia tasmaniensis (strain DSM 17950 / CFBP 7177 / CIP 109463 / NCPPB 4357 / Et1/99).